The primary structure comprises 591 residues: Aspartate--tRNA(Asp/Asn) ligase (591 aa).

Glu176 is a binding site for L-aspartate. The segment at 200 to 203 is aspartate; sequence QLFK. An L-aspartate-binding site is contributed by Arg222. ATP-binding positions include 222-224 and Gln231; that span reads RDE. His450 lines the L-aspartate pocket. Glu484 lines the ATP pocket. An L-aspartate-binding site is contributed by Arg491. 536–539 is an ATP binding site; that stretch reads GLDR.

This sequence belongs to the class-II aminoacyl-tRNA synthetase family. Type 1 subfamily. As to quaternary structure, homodimer.

Its subcellular location is the cytoplasm. The catalysed reaction is tRNA(Asx) + L-aspartate + ATP = L-aspartyl-tRNA(Asx) + AMP + diphosphate. Functionally, aspartyl-tRNA synthetase with relaxed tRNA specificity since it is able to aspartylate not only its cognate tRNA(Asp) but also tRNA(Asn). Reaction proceeds in two steps: L-aspartate is first activated by ATP to form Asp-AMP and then transferred to the acceptor end of tRNA(Asp/Asn). The polypeptide is Aspartate--tRNA(Asp/Asn) ligase (Bacillus anthracis (strain A0248)).